The primary structure comprises 81 residues: uncharacterized protein (81 aa).

An N-terminal signal peptide occupies residues 1 to 20; sequence MIDDHEALLLLVLSSGPAAL.

This is an uncharacterized protein from Treponema pallidum (strain Nichols).